A 297-amino-acid polypeptide reads, in one-letter code: Phosphoribosylaminoimidazole-succinocarboxamide synthase (297 aa).

It belongs to the SAICAR synthetase family.

The enzyme catalyses 5-amino-1-(5-phospho-D-ribosyl)imidazole-4-carboxylate + L-aspartate + ATP = (2S)-2-[5-amino-1-(5-phospho-beta-D-ribosyl)imidazole-4-carboxamido]succinate + ADP + phosphate + 2 H(+). Its pathway is purine metabolism; IMP biosynthesis via de novo pathway; 5-amino-1-(5-phospho-D-ribosyl)imidazole-4-carboxamide from 5-amino-1-(5-phospho-D-ribosyl)imidazole-4-carboxylate: step 1/2. The sequence is that of Phosphoribosylaminoimidazole-succinocarboxamide synthase from Methylococcus capsulatus (strain ATCC 33009 / NCIMB 11132 / Bath).